The sequence spans 173 residues: Urease accessory protein UreE (173 aa).

Residues 136-173 form a disordered region; it reads PEGGAYAGSGQDHHDHSHGEHTQGEHTHDEAAEPHHHG. Residues 146-173 are compositionally biased toward basic and acidic residues; that stretch reads QDHHDHSHGEHTQGEHTHDEAAEPHHHG.

This sequence belongs to the UreE family.

It localises to the cytoplasm. Its function is as follows. Involved in urease metallocenter assembly. Binds nickel. Probably functions as a nickel donor during metallocenter assembly. The polypeptide is Urease accessory protein UreE (Beijerinckia indica subsp. indica (strain ATCC 9039 / DSM 1715 / NCIMB 8712)).